Here is a 299-residue protein sequence, read N- to C-terminus: Protoheme IX farnesyltransferase 1 (299 aa).

9 helical membrane-spanning segments follow: residues 24 to 44 (VVAL…PGVP), 46 to 66 (AAVV…AAMV), 97 to 117 (LLVA…CCNA), 118 to 138 (LTAW…TLLL), 146 to 166 (IVIG…AVNG), 170 to 190 (AFAL…FWAL), 217 to 237 (LSIV…VALG), 239 to 259 (AGAI…FLAV), and 278 to 298 (IWYL…LIPL).

The protein belongs to the UbiA prenyltransferase family. Protoheme IX farnesyltransferase subfamily.

Its subcellular location is the cell inner membrane. It carries out the reaction heme b + (2E,6E)-farnesyl diphosphate + H2O = Fe(II)-heme o + diphosphate. Its pathway is porphyrin-containing compound metabolism; heme O biosynthesis; heme O from protoheme: step 1/1. Its function is as follows. Converts heme B (protoheme IX) to heme O by substitution of the vinyl group on carbon 2 of heme B porphyrin ring with a hydroxyethyl farnesyl side group. The sequence is that of Protoheme IX farnesyltransferase 1 from Chromobacterium violaceum (strain ATCC 12472 / DSM 30191 / JCM 1249 / CCUG 213 / NBRC 12614 / NCIMB 9131 / NCTC 9757 / MK).